We begin with the raw amino-acid sequence, 425 residues long: UPF0597 protein VIBHAR_03081 (425 aa).

This sequence belongs to the UPF0597 family.

The sequence is that of UPF0597 protein VIBHAR_03081 from Vibrio campbellii (strain ATCC BAA-1116).